The primary structure comprises 252 residues: Chitooligosaccharide deacetylase (252 aa).

His-61 and His-125 together coordinate Mg(2+).

This sequence belongs to the YdjC deacetylase family. ChbG subfamily. As to quaternary structure, homodimer. Mg(2+) serves as cofactor.

It is found in the cytoplasm. It catalyses the reaction N,N'-diacetylchitobiose + H2O = N-acetyl-beta-D-glucosaminyl-(1-&gt;4)-D-glucosamine + acetate. The enzyme catalyses diacetylchitobiose-6'-phosphate + H2O = N'-monoacetylchitobiose-6'-phosphate + acetate. The protein operates within glycan degradation; chitin degradation. Its function is as follows. Involved in the degradation of chitin. ChbG is essential for growth on the acetylated chitooligosaccharides chitobiose and chitotriose but is dispensable for growth on cellobiose and chitosan dimer, the deacetylated form of chitobiose. Deacetylation of chitobiose-6-P and chitotriose-6-P is necessary for both the activation of the chb promoter by the regulatory protein ChbR and the hydrolysis of phosphorylated beta-glucosides by the phospho-beta-glucosidase ChbF. Catalyzes the removal of only one acetyl group from chitobiose-6-P to yield monoacetylchitobiose-6-P, the inducer of ChbR and the substrate of ChbF. This chain is Chitooligosaccharide deacetylase, found in Escherichia coli (strain 55989 / EAEC).